The primary structure comprises 214 residues: Ependymin (214 aa).

An N-terminal signal peptide occupies residues 1-20 (MHTVKLLCVVFSCLCAVAWA). Asparagine 70 and asparagine 93 each carry an N-linked (GlcNAc...) asparagine glycan.

This sequence belongs to the ependymin family. As to quaternary structure, forms disulfide-linked dimers. Binds calcium through the terminal sialic acids.

The protein resides in the secreted. In terms of biological role, may play a role in neural plasticity. May be involved during axon regeneration. The polypeptide is Ependymin (epd) (Notemigonus crysoleucas (Golden shiner)).